The chain runs to 199 residues: MITYTKPLSKLIGHFEKFPGIGPRTAQRLALFVLKQPESTIRDFSKALLEAHSNVGRCKKCFNFTSEDECEICKNTERNQKLICVVAETKDLLALERAREFKGVYHVIGGLISPMDSVGPELLEIRSLVERVSKSEIDEIILALTPSVEGDTTSLYIGKLLAPFTKVTRIAYGLPMGSELEYVDEVTLARALEGRTKLN.

Residues cysteine 58–cysteine 73 form a C4-type zinc finger. Positions lysine 81–proline 175 constitute a Toprim domain.

It belongs to the RecR family.

In terms of biological role, may play a role in DNA repair. It seems to be involved in an RecBC-independent recombinational process of DNA repair. It may act with RecF and RecO. This chain is Recombination protein RecR, found in Prochlorococcus marinus (strain MIT 9312).